The chain runs to 414 residues: Probable protein phosphatase 2C 80 (414 aa).

Residues 174 to 411 (SCYLPHPEKE…DDITAVVSYV (238 aa)) form the PPM-type phosphatase domain. 4 residues coordinate Mn(2+): D204, G205, D336, and D402.

The protein belongs to the PP2C family. Mg(2+) is required as a cofactor. Mn(2+) serves as cofactor.

It catalyses the reaction O-phospho-L-seryl-[protein] + H2O = L-seryl-[protein] + phosphate. It carries out the reaction O-phospho-L-threonyl-[protein] + H2O = L-threonyl-[protein] + phosphate. The protein is Probable protein phosphatase 2C 80 of Arabidopsis thaliana (Mouse-ear cress).